Reading from the N-terminus, the 337-residue chain is Ribonucleoside-diphosphate reductase small subunit (337 aa).

The tract at residues 1–22 (MDPAVSPASTDPLDTHASGAGA) is disordered. Residues aspartate 91, glutamate 121, and histidine 124 each contribute to the Fe cation site. Residue tyrosine 128 is part of the active site. A helical membrane pass occupies residues 177 to 197 (FILMILIEGVFFAASFAAIAY). 3 residues coordinate Fe cation: glutamate 184, glutamate 218, and histidine 221.

The protein belongs to the ribonucleoside diphosphate reductase small chain family. In terms of assembly, heterotetramer composed of a homodimer of the large subunit (R1) and a homodimer of the small subunit (R2). Larger multisubunit protein complex are also active, composed of (R1)n(R2)n. The cofactor is Fe cation.

It localises to the host membrane. The catalysed reaction is a 2'-deoxyribonucleoside 5'-diphosphate + [thioredoxin]-disulfide + H2O = a ribonucleoside 5'-diphosphate + [thioredoxin]-dithiol. Functionally, ribonucleoside-diphosphate reductase holoenzyme provides the precursors necessary for viral DNA synthesis. Allows virus growth in non-dividing cells, as well as reactivation from latency in infected hosts. Catalyzes the biosynthesis of deoxyribonucleotides from the corresponding ribonucleotides. This chain is Ribonucleoside-diphosphate reductase small subunit, found in Human herpesvirus 2 (strain 333) (HHV-2).